A 118-amino-acid polypeptide reads, in one-letter code: Ribonuclease P protein component (118 aa).

It belongs to the RnpA family. In terms of assembly, consists of a catalytic RNA component (M1 or rnpB) and a protein subunit.

It carries out the reaction Endonucleolytic cleavage of RNA, removing 5'-extranucleotides from tRNA precursor.. Its function is as follows. RNaseP catalyzes the removal of the 5'-leader sequence from pre-tRNA to produce the mature 5'-terminus. It can also cleave other RNA substrates such as 4.5S RNA. The protein component plays an auxiliary but essential role in vivo by binding to the 5'-leader sequence and broadening the substrate specificity of the ribozyme. The polypeptide is Ribonuclease P protein component (Shewanella putrefaciens (strain CN-32 / ATCC BAA-453)).